Consider the following 212-residue polypeptide: Uracil phosphoribosyltransferase (212 aa).

5-phospho-alpha-D-ribose 1-diphosphate-binding positions include Arg-78, Arg-103, and 130–138 (DPMLATGGS). Uracil-binding positions include Ile-193 and 198–200 (GDA). Residue Asp-199 participates in 5-phospho-alpha-D-ribose 1-diphosphate binding.

The protein belongs to the UPRTase family. Requires Mg(2+) as cofactor.

It carries out the reaction UMP + diphosphate = 5-phospho-alpha-D-ribose 1-diphosphate + uracil. It functions in the pathway pyrimidine metabolism; UMP biosynthesis via salvage pathway; UMP from uracil: step 1/1. Allosterically activated by GTP. Functionally, catalyzes the conversion of uracil and 5-phospho-alpha-D-ribose 1-diphosphate (PRPP) to UMP and diphosphate. In Stutzerimonas stutzeri (strain A1501) (Pseudomonas stutzeri), this protein is Uracil phosphoribosyltransferase.